We begin with the raw amino-acid sequence, 236 residues long: Small ribosomal subunit protein uS2c (236 aa).

The protein belongs to the universal ribosomal protein uS2 family.

The protein localises to the plastid. Its subcellular location is the chloroplast. The polypeptide is Small ribosomal subunit protein uS2c (rps2) (Chloranthus spicatus (Chulantree)).